The primary structure comprises 491 residues: Conidiogenone synthase PchP450 (491 aa).

The chain crosses the membrane as a helical span at residues 2-22 (LLLWFGFFSFVCGLVIYRLQF). Cys430 contacts heme.

It belongs to the cytochrome P450 family. The cofactor is heme.

The protein localises to the membrane. It participates in secondary metabolite biosynthesis; terpenoid biosynthesis. In terms of biological role, cytochrome P450 monooxygenase; part of the gene cluster that mediates the biosynthesis of conidiogenone, a diterpene known to induce the conidiation. The bifunctional terpene synthase PrDS converts isopentenyl diphosphate (IPP) and dimethylallyl diphosphate (DMAPP) into deoxyconidiogenol. The C-terminal prenyltransferase (PT) domain of PrDS catalyzes formation of GGPP, whereas the N-terminal terpene cyclase (TC) domain catalyzes the cyclization of GGPP into deoxyconidiogenol. The cytochrome P450 monooxygenase PrP450 then catalyzes two rounds of oxidation to furnish conidiogenone. This chain is Conidiogenone synthase PchP450, found in Penicillium rubens (strain ATCC 28089 / DSM 1075 / NRRL 1951 / Wisconsin 54-1255) (Penicillium chrysogenum).